Here is an 81-residue protein sequence, read N- to C-terminus: MTTETPVEEMSFETAMQELERVVDQLERGDVALDASISLYERGAALKKRCEDELKRAEEKVAAITLDANGQPTGTQPLDAG.

Belongs to the XseB family. Heterooligomer composed of large and small subunits.

The protein localises to the cytoplasm. It carries out the reaction Exonucleolytic cleavage in either 5'- to 3'- or 3'- to 5'-direction to yield nucleoside 5'-phosphates.. Bidirectionally degrades single-stranded DNA into large acid-insoluble oligonucleotides, which are then degraded further into small acid-soluble oligonucleotides. In Ruegeria sp. (strain TM1040) (Silicibacter sp.), this protein is Exodeoxyribonuclease 7 small subunit.